A 192-amino-acid polypeptide reads, in one-letter code: UPF0312 protein YPK_1931 (192 aa).

The first 23 residues, 1–23 (MINKTLLGLSLGALMFTAGSAVA), serve as a signal peptide directing secretion.

It belongs to the UPF0312 family. Type 1 subfamily.

Its subcellular location is the periplasm. This chain is UPF0312 protein YPK_1931, found in Yersinia pseudotuberculosis serotype O:3 (strain YPIII).